The primary structure comprises 427 residues: UBX domain-containing protein 2 (427 aa).

2 disordered regions span residues 115-143 (FDQS…SRAS) and 273-331 (ETSG…GVAD). Residues 311-326 (STTESQGESSSQQAES) show a composition bias toward low complexity. The region spanning 349–425 (PGPNVTRIQI…GIQNTALQFE (77 aa)) is the UBX domain. Serine 371 carries the phosphoserine modification.

Interacts with cdc48.

Functionally, involved in CDC48-dependent protein degradation through the ubiquitin/proteasome pathway. The polypeptide is UBX domain-containing protein 2 (ubx2) (Schizosaccharomyces pombe (strain 972 / ATCC 24843) (Fission yeast)).